We begin with the raw amino-acid sequence, 286 residues long: Pantothenate synthetase (286 aa).

Residue 30–37 (MGNLHAGH) participates in ATP binding. His37 (proton donor) is an active-site residue. A (R)-pantoate-binding site is contributed by Gln61. Position 61 (Gln61) interacts with beta-alanine. Residue 149-152 (GEKD) participates in ATP binding. Gln155 lines the (R)-pantoate pocket. ATP is bound by residues Val178 and 186-189 (MSSR).

It belongs to the pantothenate synthetase family. As to quaternary structure, homodimer.

It localises to the cytoplasm. The catalysed reaction is (R)-pantoate + beta-alanine + ATP = (R)-pantothenate + AMP + diphosphate + H(+). It participates in cofactor biosynthesis; (R)-pantothenate biosynthesis; (R)-pantothenate from (R)-pantoate and beta-alanine: step 1/1. Catalyzes the condensation of pantoate with beta-alanine in an ATP-dependent reaction via a pantoyl-adenylate intermediate. This Thioalkalivibrio sulfidiphilus (strain HL-EbGR7) protein is Pantothenate synthetase.